The sequence spans 777 residues: Lon protease (777 aa).

The Lon N-terminal domain maps to Ile-11–Ile-204. Gly-356–Thr-363 serves as a coordination point for ATP. Residues Thr-592–Lys-773 form the Lon proteolytic domain. Catalysis depends on residues Ser-679 and Lys-722.

It belongs to the peptidase S16 family. As to quaternary structure, homohexamer. Organized in a ring with a central cavity.

The protein resides in the cytoplasm. It catalyses the reaction Hydrolysis of proteins in presence of ATP.. Functionally, ATP-dependent serine protease that mediates the selective degradation of mutant and abnormal proteins as well as certain short-lived regulatory proteins. Required for cellular homeostasis and for survival from DNA damage and developmental changes induced by stress. Degrades polypeptides processively to yield small peptide fragments that are 5 to 10 amino acids long. Binds to DNA in a double-stranded, site-specific manner. The sequence is that of Lon protease from Buchnera aphidicola subsp. Acyrthosiphon pisum (strain APS) (Acyrthosiphon pisum symbiotic bacterium).